Reading from the N-terminus, the 118-residue chain is Large ribosomal subunit protein uL23c (118 aa).

It belongs to the universal ribosomal protein uL23 family. As to quaternary structure, part of the 50S ribosomal subunit.

It localises to the plastid. The protein resides in the chloroplast. Binds to 23S rRNA. The sequence is that of Large ribosomal subunit protein uL23c (rpl23) from Stigeoclonium helveticum (Green alga).